A 799-amino-acid chain; its full sequence is Zinc finger protein 227 (799 aa).

The region spanning 23–94 (VTFKDVAVVF…ETETQRSSKH (72 aa)) is the KRAB domain. C2H2-type zinc fingers lie at residues 250–272 (HPCGECGRGFSYSPRLPLHPNVH), 269–291 (PNVHTGEKCFSQSSHLRTHQRIH), 324–346 (YRCDSCGKGFSSSTGLIIHYRTH), 352–374 (YKCEECGKCFSQSSNFQCHQRVH), 380–402 (YKCEECGKGFGWSVNLRVHQRVH), 408–430 (YKCEECGKGFTQAAHFHIHQRVH), 436–458 (YKCDVCGKGFSHNSPLICHRRVH), 464–486 (YKCEACGKGFTRNTDLHIHFRVH), 492–514 (YKCKECGKGFSQASNLQVHQNVH), 520–542 (FKCETCGKGFSQSSKLQTHQRVH), 548–570 (YRCDVCGKDFSYSSNLKLHQVIH), 576–598 (YKCEECGKGFSWRSNLHAHQRVH), 604–626 (YKCEQCDKSFSQAIDFRVHQRVH), 632–654 (YKCGVCGKGFSQSSGLQSHQRVH), 660–682 (YKCDVCGKGFRYSSQFIYHQRGH), 688–710 (YKCEECGKGFGRSLNLRHHQRVH), 716–738 (HICEECGKAFSLPSNLRVHLGVH), 744–766 (FKCEECGKGFSQSARLEAHQRVH), and 772–794 (YKCDICDKDFRHRSRLTYHQKVH).

Belongs to the krueppel C2H2-type zinc-finger protein family.

It localises to the nucleus. In terms of biological role, may be involved in transcriptional regulation. The sequence is that of Zinc finger protein 227 (ZNF227) from Homo sapiens (Human).